Here is a 144-residue protein sequence, read N- to C-terminus: Large ribosomal subunit protein uL15 (144 aa).

A disordered region spans residues Met-1–Gly-51. Over residues Leu-23–Thr-35 the composition is skewed to gly residues.

It belongs to the universal ribosomal protein uL15 family. Part of the 50S ribosomal subunit.

Its function is as follows. Binds to the 23S rRNA. In Limosilactobacillus reuteri (strain DSM 20016) (Lactobacillus reuteri), this protein is Large ribosomal subunit protein uL15.